We begin with the raw amino-acid sequence, 248 residues long: Biosynthetic peptidoglycan transglycosylase (248 aa).

Residues 17–37 (LLIFFFASTILAVIVYRFMPV) traverse the membrane as a helical segment.

Belongs to the glycosyltransferase 51 family.

It localises to the cell inner membrane. The enzyme catalyses [GlcNAc-(1-&gt;4)-Mur2Ac(oyl-L-Ala-gamma-D-Glu-L-Lys-D-Ala-D-Ala)](n)-di-trans,octa-cis-undecaprenyl diphosphate + beta-D-GlcNAc-(1-&gt;4)-Mur2Ac(oyl-L-Ala-gamma-D-Glu-L-Lys-D-Ala-D-Ala)-di-trans,octa-cis-undecaprenyl diphosphate = [GlcNAc-(1-&gt;4)-Mur2Ac(oyl-L-Ala-gamma-D-Glu-L-Lys-D-Ala-D-Ala)](n+1)-di-trans,octa-cis-undecaprenyl diphosphate + di-trans,octa-cis-undecaprenyl diphosphate + H(+). It functions in the pathway cell wall biogenesis; peptidoglycan biosynthesis. In terms of biological role, peptidoglycan polymerase that catalyzes glycan chain elongation from lipid-linked precursors. The protein is Biosynthetic peptidoglycan transglycosylase of Bacteroides thetaiotaomicron (strain ATCC 29148 / DSM 2079 / JCM 5827 / CCUG 10774 / NCTC 10582 / VPI-5482 / E50).